The following is a 391-amino-acid chain: Histamine H4 receptor (391 aa).

The Extracellular segment spans residues 1–19 (MSESNGTDVLPLTAQVPLA). A glycan (N-linked (GlcNAc...) asparagine) is linked at Asn5. Residues 20-40 (FLMSLLAFAITIGNAVVILAF) form a helical membrane-spanning segment. Topologically, residues 41-52 (VADRNLRHRSNY) are cytoplasmic. The chain crosses the membrane as a helical span at residues 53–73 (FFLNLAISDFFVGVISIPLYI). At 74–87 (PHTLFNWNFGSGIC) the chain is on the extracellular side. Cys87 and Cys166 are disulfide-bonded. Residues 88 to 108 (MFWLITDYLLCTASVYSIVLI) traverse the membrane as a helical segment. The Cytoplasmic portion of the chain corresponds to 109–131 (SYDRYQSVSNAVRYRAQHTGILK). A helical transmembrane segment spans residues 132–152 (IVAQMVAVWILAFLVNGPMIL). At 153 to 174 (ASDSWKNSTNTEECEPGFVTEW) the chain is on the extracellular side. N-linked (GlcNAc...) asparagine glycosylation occurs at Asn159. The chain crosses the membrane as a helical span at residues 175-195 (YILAITAFLEFLLPVSLVVYF). Residues 196–306 (SVQIYWSLWK…LLRGRKLARS (111 aa)) are Cytoplasmic-facing. A helical transmembrane segment spans residues 307–327 (LAVLLSAFAICWAPYCLFTIV). Residues 328–343 (LSTYRRGERPKSIWYS) are Extracellular-facing. The helical transmembrane segment at 344–364 (IAFWLQWFNSLINPFLYPLCH) threads the bilayer. At 365-391 (RRFQKAFWKILCVTKQPAPSQTQSVSS) the chain is on the cytoplasmic side.

Belongs to the G-protein coupled receptor 1 family. Interacts with TSPAN4.

Its subcellular location is the cell membrane. The H4 subclass of histamine receptors could mediate the histamine signals in peripheral tissues. Displays a significant level of constitutive activity (spontaneous activity in the absence of agonist). The sequence is that of Histamine H4 receptor (Hrh4) from Rattus norvegicus (Rat).